The chain runs to 531 residues: Peptide chain release factor 3 (531 aa).

In terms of domain architecture, tr-type G spans 10 to 278 (RRRRTFAIIS…SLIDWAPAPK (269 aa)). Residues 19–26 (SHPDAGKT), 87–91 (DTPGH), and 141–144 (NKYD) contribute to the GTP site.

It belongs to the TRAFAC class translation factor GTPase superfamily. Classic translation factor GTPase family. PrfC subfamily.

It is found in the cytoplasm. In terms of biological role, increases the formation of ribosomal termination complexes and stimulates activities of RF-1 and RF-2. It binds guanine nucleotides and has strong preference for UGA stop codons. It may interact directly with the ribosome. The stimulation of RF-1 and RF-2 is significantly reduced by GTP and GDP, but not by GMP. This chain is Peptide chain release factor 3, found in Neisseria meningitidis serogroup C / serotype 2a (strain ATCC 700532 / DSM 15464 / FAM18).